Reading from the N-terminus, the 267-residue chain is 3-methyl-2-oxobutanoate hydroxymethyltransferase (267 aa).

2 residues coordinate Mg(2+): aspartate 41 and aspartate 80. 3-methyl-2-oxobutanoate is bound by residues 41–42 (DS), aspartate 80, and lysine 109. A Mg(2+)-binding site is contributed by glutamate 111. The Proton acceptor role is filled by glutamate 178.

It belongs to the PanB family. In terms of assembly, homodecamer; pentamer of dimers. Requires Mg(2+) as cofactor.

The protein resides in the cytoplasm. It catalyses the reaction 3-methyl-2-oxobutanoate + (6R)-5,10-methylene-5,6,7,8-tetrahydrofolate + H2O = 2-dehydropantoate + (6S)-5,6,7,8-tetrahydrofolate. It participates in cofactor biosynthesis; (R)-pantothenate biosynthesis; (R)-pantoate from 3-methyl-2-oxobutanoate: step 1/2. Catalyzes the reversible reaction in which hydroxymethyl group from 5,10-methylenetetrahydrofolate is transferred onto alpha-ketoisovalerate to form ketopantoate. This Kosmotoga olearia (strain ATCC BAA-1733 / DSM 21960 / TBF 19.5.1) protein is 3-methyl-2-oxobutanoate hydroxymethyltransferase.